Consider the following 301-residue polypeptide: MPTLRLPDGVLSAAVSRSVVSEYRERYSLLDIDQRVAHALTMEVMLTPKPGLVDRANNGSHRDMDVALFQTSIQAISPWFRHFTDAGYQHASVPLAQLLSQVRPIGIACEQAMLSATKGVNTHKGGIFAFGLLCTAAGWLTARGERVTQRSLCDSVAAMCHDLVRNELETCSGAATAGEHLYLRHGLTGARGEAASGFNTVCQHALPALQQAIAAGMDDETALLQTLLVLMAHNPDTNVVSRGGMDGLAFVQDYAQRLLAGPLDRQALIKMDEALIARNLSPGGSADLLALTWLLYHYPTE.

The protein belongs to the CitG/MdcB family.

The enzyme catalyses 3'-dephospho-CoA + ATP = 2'-(5''-triphospho-alpha-D-ribosyl)-3'-dephospho-CoA + adenine. Catalyzes the formation of 2-(5''-triphosphoribosyl)-3'-dephosphocoenzyme-A, the precursor of the prosthetic group of the holo-acyl carrier protein (gamma chain) of citrate lyase, from ATP and dephospho-CoA. In Pectobacterium atrosepticum (strain SCRI 1043 / ATCC BAA-672) (Erwinia carotovora subsp. atroseptica), this protein is 2-(5''-triphosphoribosyl)-3'-dephosphocoenzyme-A synthase (citG).